We begin with the raw amino-acid sequence, 637 residues long: Chaperone protein HtpG (637 aa).

Positions Met1–Arg345 are a; substrate-binding. A b region spans residues Glu346–Lys562. The tract at residues Leu563–Lys637 is c.

Belongs to the heat shock protein 90 family. In terms of assembly, homodimer.

It is found in the cytoplasm. In terms of biological role, molecular chaperone. Has ATPase activity. This chain is Chaperone protein HtpG, found in Shewanella sp. (strain ANA-3).